We begin with the raw amino-acid sequence, 65 residues long: UPF0434 protein CPS_2127 (65 aa).

It belongs to the UPF0434 family.

This is UPF0434 protein CPS_2127 from Colwellia psychrerythraea (strain 34H / ATCC BAA-681) (Vibrio psychroerythus).